A 445-amino-acid chain; its full sequence is C4-dicarboxylate transport protein (445 aa).

8 helical membrane passes run 17–37, 56–76, 91–111, 157–177, 200–220, 233–253, 319–339, and 367–387; these read FYQILYVQVLVAIVIGVLLGY, LVKMIIAPVIFLTVTTGIAAM, VYFLVFSTLALIIGMVVSHIV, FVGGDILQVLFVAVLFGLSLA, LVAILMKAAPIGAFGAMAFTI, MLVGTFYATSVLFVVVVLGMV, IYMTMAALFIAQACDIPLSLG, and AATLSVVPTVPVAGMALILGV.

The protein belongs to the dicarboxylate/amino acid:cation symporter (DAACS) (TC 2.A.23) family.

It is found in the cell inner membrane. Its function is as follows. Responsible for the transport of dicarboxylates such as succinate, fumarate, and malate from the periplasm across the membrane. This is C4-dicarboxylate transport protein from Bordetella avium (strain 197N).